The following is a 298-amino-acid chain: Transcription factor SRM1 (298 aa).

The SANT domain maps to 7–62 (SDGSVWSREDDIAFERALANNTDESEERWEKIAADVPGKSVEQIKEHYELLVEDVT). The interval 68 to 118 (CVPLPAYGSPEGSNGHAGDEGASSKKGGNSHAGESNQAGKSKSDQERRKGI) is disordered. Over residues 108–118 (SKSDQERRKGI) the composition is skewed to basic and acidic residues. Residues 111-168 (DQERRKGIAWTEDEHRLFLLGLDKYGKGDWRSISRNFVVTRTPTQVASHAQKYFIRLN) enclose the HTH myb-type domain. The segment at residues 140–164 (WRSISRNFVVTRTPTQVASHAQKYF) is a DNA-binding region (H-T-H motif). Polar residues predominate over residues 182–200 (ITSVGNADVSTPQGPITGQ). The tract at residues 182-245 (ITSVGNADVS…GPPMYGTPAI (64 aa)) is disordered. The segment covering 201 to 215 (NNSNNNNNNNNNNSS) has biased composition (low complexity).

Expressed in young seedlings, developing leaves, sepals and trichomes.

Its subcellular location is the nucleus. Transcription activator that coordinates abscisic acid (ABA) biosynthesis and signaling-related genes via binding to the specific promoter motif 5'-(A/T)AACCAT-3'. Represses ABA-mediated salt (e.g. NaCl and KCl) stress tolerance. Regulates leaf shape and promotes vegetative growth. In Arabidopsis thaliana (Mouse-ear cress), this protein is Transcription factor SRM1.